Consider the following 66-residue polypeptide: Opicalcin-1 (66 aa).

Positions 1–22 are cleaved as a signal peptide; sequence MKPSLIIVTFIVVFMAISCVAA. The propeptide occupies 23–31; it reads DDEQETWIE. 3 disulfides stabilise this stretch: Cys-36/Cys-50, Cys-43/Cys-54, and Cys-49/Cys-65. Residues 55 to 57 are essential for stimulation of [3H]ryanodine binding to RYR1; that stretch reads KRR.

Belongs to the scorpion calcin family. As to expression, expressed by the venom gland.

It localises to the secreted. This toxin stabilizes ryanodine receptor 1 (RyR1) opening in a long-lasting subconductance state (35% of the full conductance state). Furthermore, it triggers calcium release from sarcoplasmic vesicles (2 nM are enough to induce a sharp release, and 67% of the total calcium is released after toxin (100 nM) addition) probably by acting as a cell-penetrating peptide (CPP). In addition, it has been shown to dose-dependently stimulate ryanodine binding to RyR1 (EC(50)=0.3 nM). It also augments the bell-shaped calcium-[3H]ryanodine binding curve that is maximal at about 10 uM calcium concentration. It binds a different site as ryanodine. It acts synergistically with caffeine. In vivo, intracerebroventricular injection into mice induces neurotoxic symptoms, followed by death. In Opistophthalmus carinatus (African yellow leg scorpion), this protein is Opicalcin-1.